Here is a 250-residue protein sequence, read N- to C-terminus: 1-(5-phosphoribosyl)-5-[(5-phosphoribosylamino)methylideneamino] imidazole-4-carboxamide isomerase (250 aa).

Aspartate 8 serves as the catalytic Proton acceptor. Residue aspartate 129 is the Proton donor of the active site.

It belongs to the HisA/HisF family.

The protein resides in the cytoplasm. The catalysed reaction is 1-(5-phospho-beta-D-ribosyl)-5-[(5-phospho-beta-D-ribosylamino)methylideneamino]imidazole-4-carboxamide = 5-[(5-phospho-1-deoxy-D-ribulos-1-ylimino)methylamino]-1-(5-phospho-beta-D-ribosyl)imidazole-4-carboxamide. Its pathway is amino-acid biosynthesis; L-histidine biosynthesis; L-histidine from 5-phospho-alpha-D-ribose 1-diphosphate: step 4/9. This is 1-(5-phosphoribosyl)-5-[(5-phosphoribosylamino)methylideneamino] imidazole-4-carboxamide isomerase from Desulfatibacillum aliphaticivorans.